An 83-amino-acid polypeptide reads, in one-letter code: Cytochrome b559 subunit alpha (83 aa).

The chain crosses the membrane as a helical span at residues 21-35; that stretch reads VIHSITIPSLFIAGW. His-23 lines the heme pocket.

Belongs to the PsbE/PsbF family. Heterodimer of an alpha subunit and a beta subunit. PSII is composed of 1 copy each of membrane proteins PsbA, PsbB, PsbC, PsbD, PsbE, PsbF, PsbH, PsbI, PsbJ, PsbK, PsbL, PsbM, PsbT, PsbX, PsbY, PsbZ, Psb30/Ycf12, at least 3 peripheral proteins of the oxygen-evolving complex and a large number of cofactors. It forms dimeric complexes. Requires heme b as cofactor.

The protein resides in the plastid. The protein localises to the chloroplast thylakoid membrane. This b-type cytochrome is tightly associated with the reaction center of photosystem II (PSII). PSII is a light-driven water:plastoquinone oxidoreductase that uses light energy to abstract electrons from H(2)O, generating O(2) and a proton gradient subsequently used for ATP formation. It consists of a core antenna complex that captures photons, and an electron transfer chain that converts photonic excitation into a charge separation. The chain is Cytochrome b559 subunit alpha from Mesembryanthemum crystallinum (Common ice plant).